Reading from the N-terminus, the 143-residue chain is Nucleoside diphosphate kinase (143 aa).

6 residues coordinate ATP: Lys-11, Phe-59, Arg-87, Thr-93, Arg-104, and Asn-114. His-117 functions as the Pros-phosphohistidine intermediate in the catalytic mechanism.

It belongs to the NDK family. Homotetramer. Mg(2+) serves as cofactor.

It is found in the cytoplasm. It carries out the reaction a 2'-deoxyribonucleoside 5'-diphosphate + ATP = a 2'-deoxyribonucleoside 5'-triphosphate + ADP. The catalysed reaction is a ribonucleoside 5'-diphosphate + ATP = a ribonucleoside 5'-triphosphate + ADP. Its function is as follows. Major role in the synthesis of nucleoside triphosphates other than ATP. The ATP gamma phosphate is transferred to the NDP beta phosphate via a ping-pong mechanism, using a phosphorylated active-site intermediate. The sequence is that of Nucleoside diphosphate kinase from Idiomarina loihiensis (strain ATCC BAA-735 / DSM 15497 / L2-TR).